A 109-amino-acid polypeptide reads, in one-letter code: Small ribosomal subunit protein uS17 (109 aa).

It belongs to the universal ribosomal protein uS17 family. As to quaternary structure, part of the 30S ribosomal subunit.

In terms of biological role, one of the primary rRNA binding proteins, it binds specifically to the 5'-end of 16S ribosomal RNA. This chain is Small ribosomal subunit protein uS17, found in Thermoplasma acidophilum (strain ATCC 25905 / DSM 1728 / JCM 9062 / NBRC 15155 / AMRC-C165).